The primary structure comprises 66 residues: Large ribosomal subunit protein bL35 (66 aa).

Belongs to the bacterial ribosomal protein bL35 family.

This Phenylobacterium zucineum (strain HLK1) protein is Large ribosomal subunit protein bL35.